Consider the following 395-residue polypeptide: MTLPTDPAQNLASLIRCRSVTPVEGGALTALEAMLRPLGARVDRPVFSEEGEADVENLYARIGKDGPHLMFAGHTDVVPPGDEDAWTHPPFAAEIAGGEMFGRGAVDMKGGIACFVAALARHLEVSGTPKGSVSFLITGDEEGPSVNGSVKLLEWAAARGERWDAALVGEPTNVETLGDMVKIGRRGSLSGRITLFGRQGHVAYPHLADNPSRGLVALLEALMEPAFDQGTADFPPTNLEITTIDVGNPSVNVIPARATAAFNVRFNDTWSVETLQAEIHNRLDRAAAENRLRPGRTEPVSFELEWRDRPSPVFLTRDDKLVATLAASIEAVTGRKPQLSTTGGTSDARFIKDYCPVIEFGLVGQTMHMVDEKVPLSDLETLTRIYQRFLENWFS.

Residue H74 coordinates Zn(2+). Residue D76 is part of the active site. D107 is a binding site for Zn(2+). The Proton acceptor role is filled by E141. The Zn(2+) site is built by E142, E170, and H368.

The protein belongs to the peptidase M20A family. DapE subfamily. In terms of assembly, homodimer. It depends on Zn(2+) as a cofactor. The cofactor is Co(2+).

The catalysed reaction is N-succinyl-(2S,6S)-2,6-diaminopimelate + H2O = (2S,6S)-2,6-diaminopimelate + succinate. The protein operates within amino-acid biosynthesis; L-lysine biosynthesis via DAP pathway; LL-2,6-diaminopimelate from (S)-tetrahydrodipicolinate (succinylase route): step 3/3. In terms of biological role, catalyzes the hydrolysis of N-succinyl-L,L-diaminopimelic acid (SDAP), forming succinate and LL-2,6-diaminopimelate (DAP), an intermediate involved in the bacterial biosynthesis of lysine and meso-diaminopimelic acid, an essential component of bacterial cell walls. The chain is Succinyl-diaminopimelate desuccinylase from Chelativorans sp. (strain BNC1).